A 103-amino-acid chain; its full sequence is Small ribosomal subunit protein uS10 (103 aa).

This sequence belongs to the universal ribosomal protein uS10 family. As to quaternary structure, part of the 30S ribosomal subunit.

Involved in the binding of tRNA to the ribosomes. The sequence is that of Small ribosomal subunit protein uS10 from Rubrobacter xylanophilus (strain DSM 9941 / JCM 11954 / NBRC 16129 / PRD-1).